Reading from the N-terminus, the 40-residue chain is Fibrinolytic protease (40 aa).

One can recognise a Peptidase S1 domain in the interval 1–40; that stretch reads IVGGNEVTPHAYPWQVGLFIDDMYFCGGSISVTLTGWGKP.

Belongs to the peptidase S1 family.

The protein resides in the secreted. It is found in the extracellular space. Functionally, serine protease with fibrinolytic activity. This Euphausia superba (Antarctic krill) protein is Fibrinolytic protease.